The sequence spans 193 residues: D-alanyl-D-alanine dipeptidase (193 aa).

2 residues coordinate Zn(2+): histidine 98 and aspartate 105. The active-site Proton donor/acceptor is the glutamate 162. Histidine 165 is a Zn(2+) binding site.

This sequence belongs to the peptidase M15D family. Zn(2+) serves as cofactor.

The protein resides in the cytoplasm. The catalysed reaction is D-alanyl-D-alanine + H2O = 2 D-alanine. Functionally, catalyzes hydrolysis of the D-alanyl-D-alanine dipeptide. May have a role in cell-wall turnover. The sequence is that of D-alanyl-D-alanine dipeptidase from Escherichia coli (strain K12).